Here is a 331-residue protein sequence, read N- to C-terminus: Inner membrane ABC transporter permease protein YjfF (331 aa).

Topologically, residues 1–5 (MIKRN) are cytoplasmic. Residues 6 to 26 (LPLMITIGVFVLGYLYCLTQF) form a helical membrane-spanning segment. At 27–42 (PGFASTRVICNILTDN) the chain is on the periplasmic side. The helical transmembrane segment at 43–63 (AFLGIIAVGMTFVILSGGIDL) threads the bilayer. Residues 64-88 (SVGSVIAFTGVFLAKVIGDFGLSPL) are Cytoplasmic-facing. Residues 89–109 (LAFPLVLVMGCAFGAFMGLLI) form a helical membrane-spanning segment. Topologically, residues 110 to 113 (DALK) are periplasmic. The chain crosses the membrane as a helical span at residues 114–134 (IPAFIITLAGMFFLRGVSYLV). The Cytoplasmic portion of the chain corresponds to 135–159 (SEESIPINHPIYDTLSSLAWKIPGG). Residues 160–180 (GRLSAMGLLMLAVVVIGIFLA) traverse the membrane as a helical segment. Over 181–222 (HRTRFGNQVYAIGGNATSANLMGISTRSTTIRIYMLSTGLAT) the chain is Periplasmic. Residues 223–243 (LAGIVFSIYTQAGYALAGVGV) form a helical membrane-spanning segment. Residues 244–250 (ELDAIAS) lie on the Cytoplasmic side of the membrane. The chain crosses the membrane as a helical span at residues 251–271 (VVIGGTLLSGGVGTVLGTLFG). Residues 272–294 (VAIQGLIQTYINFDGTLSSWWTK) lie on the Periplasmic side of the membrane. The helical transmembrane segment at 295–315 (IAIGILLFIFIALQRGLTVLW) threads the bilayer. The Cytoplasmic segment spans residues 316 to 331 (ENRQSSPVTRVNIAQQ).

It belongs to the binding-protein-dependent transport system permease family. AraH/RbsC subfamily. In terms of assembly, the complex is composed of two ATP-binding proteins (YtfR), two transmembrane proteins (YtfT and YjfF) and a solute-binding protein (YtfQ).

It is found in the cell inner membrane. Part of the ABC transporter complex YtfQRT-YjfF involved in galactofuranose transport. Probably responsible for the translocation of the substrate across the membrane. The polypeptide is Inner membrane ABC transporter permease protein YjfF (yjfF) (Escherichia coli (strain K12)).